The primary structure comprises 265 residues: Uridylate kinase (265 aa).

Positions 1–29 (MTESREPHVAGSAAPRPEPANGLASGQPS) are disordered. 40–43 (KLGG) serves as a coordination point for ATP. Gly81 is a UMP binding site. 2 residues coordinate ATP: Gly82 and Arg86. UMP-binding positions include Asp101 and 162-169 (MGLPYFST). ATP is bound by residues Phe195 and Asp198.

The protein belongs to the UMP kinase family. Homohexamer.

It localises to the cytoplasm. The enzyme catalyses UMP + ATP = UDP + ADP. Its pathway is pyrimidine metabolism; CTP biosynthesis via de novo pathway; UDP from UMP (UMPK route): step 1/1. Inhibited by UTP. Its function is as follows. Catalyzes the reversible phosphorylation of UMP to UDP. This chain is Uridylate kinase, found in Mycobacterium avium (strain 104).